We begin with the raw amino-acid sequence, 333 residues long: Biotin synthase (333 aa).

The Radical SAM core domain maps to 51-281 (HFGNQVSLCG…DVHITICGGR (231 aa)). [4Fe-4S] cluster contacts are provided by cysteine 69, cysteine 73, and cysteine 76. Cysteine 206 serves as a coordination point for [2Fe-2S] cluster.

This sequence belongs to the radical SAM superfamily. Biotin synthase family. In terms of assembly, homodimer. It depends on [4Fe-4S] cluster as a cofactor. [2Fe-2S] cluster is required as a cofactor.

The enzyme catalyses (4R,5S)-dethiobiotin + (sulfur carrier)-SH + 2 reduced [2Fe-2S]-[ferredoxin] + 2 S-adenosyl-L-methionine = (sulfur carrier)-H + biotin + 2 5'-deoxyadenosine + 2 L-methionine + 2 oxidized [2Fe-2S]-[ferredoxin]. It functions in the pathway cofactor biosynthesis; biotin biosynthesis; biotin from 7,8-diaminononanoate: step 2/2. In terms of biological role, catalyzes the conversion of dethiobiotin (DTB) to biotin by the insertion of a sulfur atom into dethiobiotin via a radical-based mechanism. This Trichlorobacter lovleyi (strain ATCC BAA-1151 / DSM 17278 / SZ) (Geobacter lovleyi) protein is Biotin synthase.